Consider the following 171-residue polypeptide: MNSFEPQSQDSLQRRFHQDNSTTQQPRDTTTPFIPKPASKNHNNSNSSSGAAGRSFQGFGLNVEDDLVSSVVPPVTVVLEGRSICQRISLDKHGSYQSLASALRQMFVDGADSTDDLDLSNAIPGHLIAYEDMENDLLLAGDLTWKDFVRVAKRIRILPVKGNTRQVKRNE.

Composition is skewed to polar residues over residues 1–11 (MNSFEPQSQDS) and 19–32 (DNST…TTTP). Residues 1-51 (MNSFEPQSQDSLQRRFHQDNSTTQQPRDTTTPFIPKPASKNHNNSNSSSGA) form a disordered region. The segment covering 40–49 (KNHNNSNSSS) has biased composition (low complexity). In terms of domain architecture, PB1 spans 72–162 (VPPVTVVLEG…KRIRILPVKG (91 aa)).

The protein belongs to the Aux/IAA family. As to quaternary structure, homodimers and heterodimers.

Its subcellular location is the nucleus. Aux/IAA proteins are short-lived transcriptional factors that function as repressors of early auxin response genes at low auxin concentrations. Repression is thought to result from the interaction with auxin response factors (ARFs), proteins that bind to the auxin-responsive promoter element (AuxRE). Formation of heterodimers with ARF proteins may alter their ability to modulate early auxin response genes expression. In Arabidopsis thaliana (Mouse-ear cress), this protein is Auxin-responsive protein IAA33 (IAA33).